Consider the following 100-residue polypeptide: Small ribosomal subunit protein uS14 (100 aa).

It belongs to the universal ribosomal protein uS14 family. As to quaternary structure, part of the 30S ribosomal subunit. Contacts proteins S3 and S10.

In terms of biological role, binds 16S rRNA, required for the assembly of 30S particles and may also be responsible for determining the conformation of the 16S rRNA at the A site. This chain is Small ribosomal subunit protein uS14, found in Synechocystis sp. (strain ATCC 27184 / PCC 6803 / Kazusa).